A 1214-amino-acid chain; its full sequence is Delta-latroinsectotoxin-Lt1a (1214 aa).

The tract at residues 64–89 is helix H2 is the probable transmembrane region of the tetrameric pore inserted in the target cell membrane; that stretch reads IGSIPVIGEVVGIVTAPIAIVSHITS. The helix H8 is the probable transmembrane region of the tetrameric pore inserted in the target cell membrane stretch occupies residues 250–269; that stretch reads ALYALFYGTQTYAAVMFFLL. ANK repeat units follow at residues 464-497, 501-532, 536-565, 570-600, 604-633, 637-666, 670-699, 706-734, 740-769, 773-802, 806-835, 839-868, 872-901, 906-936, and 966-994; these read DIHR…DIEA, NDRS…DIEL, NGFT…DVNA, TNLT…KVNE, DGFT…DKNA, SGLT…DLNI, NHMA…KVSI, NNWT…DINL, GNLT…NIEE, EGYT…DIEA, DNLT…DIGA, DGST…NLKE, NKYL…SLKD, EGRT…TLDE, and VKPT…PEGS. A propeptide spans 1020 to 1214 (C-terminal domain cleavage is required for toxin activation); it reads IVKETNSRYL…IDVHQKMFLR (195 aa).

The protein belongs to the cationic peptide 01 (latrotoxin) family. 04 (delta-latroinsectotoxin) subfamily. Homotetramer in membrane. Expressed by the venom gland.

It localises to the secreted. Its subcellular location is the target cell membrane. In terms of biological role, insecticidal presynaptic neurotoxin that induces massive neurotransmitter release at insect (but not vertebrate) neuromuscular junctions. Native toxin forms cation-permeable pores (with high permeability to calcium) in lipid membranes locust muscle membrane and artificial lipid bilayers. May bind to insect neurexin-1 homolog, insect adhesion G protein-coupled receptor L1 homolog, and insect receptor-type tyrosine-protein phosphatase S homolog, and induces neurotransmitter exocytosis both by forming tetrameric pores in membranes and signaling via G protein-coupled receptor. Oligomerization is a process independent of divalent cations. This is Delta-latroinsectotoxin-Lt1a from Latrodectus tredecimguttatus (Mediterranean black widow spider).